The sequence spans 159 residues: Large ribosomal subunit protein uL10 (159 aa).

Belongs to the universal ribosomal protein uL10 family. Part of the ribosomal stalk of the 50S ribosomal subunit. The N-terminus interacts with L11 and the large rRNA to form the base of the stalk. The C-terminus forms an elongated spine to which L12 dimers bind in a sequential fashion forming a multimeric L10(L12)X complex.

Forms part of the ribosomal stalk, playing a central role in the interaction of the ribosome with GTP-bound translation factors. The sequence is that of Large ribosomal subunit protein uL10 from Nautilia profundicola (strain ATCC BAA-1463 / DSM 18972 / AmH).